Reading from the N-terminus, the 34-residue chain is Photosystem II reaction center protein Psb30 (34 aa).

The chain crosses the membrane as a helical span at residues 6–26 (VIAQLVSLGVIVLVGPAVIIL).

The protein belongs to the Psb30/Ycf12 family. In terms of assembly, PSII is composed of 1 copy each of membrane proteins PsbA, PsbB, PsbC, PsbD, PsbE, PsbF, PsbH, PsbI, PsbJ, PsbK, PsbL, PsbM, PsbT, PsbX, PsbY, PsbZ, Psb30/Ycf12, peripheral proteins of the oxygen-evolving complex and a large number of cofactors. It forms dimeric complexes.

The protein resides in the plastid. Its subcellular location is the chloroplast thylakoid membrane. In terms of biological role, a core subunit of photosystem II (PSII), probably helps stabilize the reaction center. The polypeptide is Photosystem II reaction center protein Psb30 (Pyropia yezoensis (Susabi-nori)).